We begin with the raw amino-acid sequence, 161 residues long: Putative TRAP transporter small permease protein HI_1030 (161 aa).

4 helical membrane passes run 13-33, 51-71, 86-106, and 135-155; these read LEIL…LNVV, YLFI…NQHV, AILK…IIEG, and IAGI…IFFI.

The protein belongs to the TRAP transporter small permease family.

The protein localises to the cell inner membrane. This chain is Putative TRAP transporter small permease protein HI_1030, found in Haemophilus influenzae (strain ATCC 51907 / DSM 11121 / KW20 / Rd).